The sequence spans 968 residues: RNA polymerase-associated protein RapA (968 aa).

Residues 164–334 enclose the Helicase ATP-binding domain; the sequence is DVGRRHAPRV…FARLRLLDPN (171 aa). 177-184 contributes to the ATP binding site; it reads DEVGLGKT. Residues 280–283 carry the DEAH box motif; it reads DEAH. The region spanning 490–662 is the Helicase C-terminal domain; that stretch reads RVEWLMGYLT…YLASPDQTEG (173 aa).

This sequence belongs to the SNF2/RAD54 helicase family. RapA subfamily. In terms of assembly, interacts with the RNAP. Has a higher affinity for the core RNAP than for the holoenzyme. Its ATPase activity is stimulated by binding to RNAP.

In terms of biological role, transcription regulator that activates transcription by stimulating RNA polymerase (RNAP) recycling in case of stress conditions such as supercoiled DNA or high salt concentrations. Probably acts by releasing the RNAP, when it is trapped or immobilized on tightly supercoiled DNA. Does not activate transcription on linear DNA. Probably not involved in DNA repair. In Escherichia fergusonii (strain ATCC 35469 / DSM 13698 / CCUG 18766 / IAM 14443 / JCM 21226 / LMG 7866 / NBRC 102419 / NCTC 12128 / CDC 0568-73), this protein is RNA polymerase-associated protein RapA.